Reading from the N-terminus, the 163-residue chain is Putative pre-16S rRNA nuclease (163 aa).

This sequence belongs to the YqgF nuclease family.

It localises to the cytoplasm. Could be a nuclease involved in processing of the 5'-end of pre-16S rRNA. This chain is Putative pre-16S rRNA nuclease, found in Rhodopseudomonas palustris (strain BisA53).